We begin with the raw amino-acid sequence, 304 residues long: Peroxisomal membrane protein 13 (304 aa).

2 disordered regions span residues 1–78 (MASQ…WEQQ) and 258–304 (PRKM…VWGN). Polar residues-rich tracts occupy residues 19-44 (NTSG…SGTA) and 56-67 (RPNTAANMNSLS). Residues 262 to 279 (QQPPQGPNGLPLPHQPHG) are compositionally biased toward low complexity.

This sequence belongs to the peroxin-13 family. Interacts with PEX14; forming the PEX13-PEX14 docking complex. Interacts (via N-terminus) with PEX7, but not with PEX5. Interacts with APEM9 (via N-terminus). Highly expressed in pollen. Detected in shoots, roots, stems, leaves, inflorescences and emasculated postils. Strongly expressed in both male and female gametophytes during fertilization.

It localises to the peroxisome membrane. Component of the PEX13-PEX14 docking complex, a translocon channel that specifically mediates the import of peroxisomal cargo proteins bound to PEX5 receptor. The PEX13-PEX14 docking complex forms a large import pore which can be opened to a diameter of about 9 nm. Mechanistically, PEX5 receptor along with cargo proteins associates with the PEX14 subunit of the PEX13-PEX14 docking complex in the cytosol, leading to the insertion of the receptor into the organelle membrane with the concomitant translocation of the cargo into the peroxisome matrix. Essential for pollen-tube discharge that take place only in the presence of functional peroxisomes in either the male or the female gametophyte. This is Peroxisomal membrane protein 13 from Arabidopsis thaliana (Mouse-ear cress).